A 298-amino-acid chain; its full sequence is Sulfofructose kinase (298 aa).

6-deoxy-6-sulfo-D-fructose is bound by residues aspartate 13, lysine 27, glycine 39, serine 95, and arginine 138. Residues threonine 212, glycine 214, glycine 217, and glycine 243 each coordinate ATP. Residue aspartate 244 coordinates 6-deoxy-6-sulfo-D-fructose.

Belongs to the carbohydrate kinase PfkB family. In terms of assembly, homodimer.

The catalysed reaction is 6-deoxy-6-sulfo-D-fructose + ATP = 6-deoxy-6-sulfo-D-fructose 1-phosphate + ADP + H(+). With respect to regulation, strongly inhibited by ADP. Activated by sulfoquinovose (SQ), sulfolactaldehyde (SLA) and dihydroxyacetone phosphate (DHAP) (through effects on KM) and by fructose 6-phosphate (F6P), fructose bisphosphate (FBP), phosphoenolpyruvate (PEP) and citrate (through effects on kcat/KM). Phosphorylates 6-deoxy-6-sulfo-D-fructose (SF) to 6-deoxy-6-sulfo-D-fructose 1-phosphate (SFP). Cannot phosphorylate fructose 6-phosphate. The chain is Sulfofructose kinase (yihV) from Escherichia coli (strain K12).